The primary structure comprises 262 residues: Tetrahydromethanopterin S-methyltransferase subunit C (262 aa).

A run of 6 helical transmembrane segments spans residues 35-57, 70-92, 97-119, 140-162, 172-194, and 214-236; these read FVPS…AGAN, GVPS…GVLI, GLPV…FIVG, LSLM…FSAD, GVIA…ACIG, and WLIF…FWLY.

Belongs to the MtrC family. The complex is composed of 8 subunits; MtrA, MtrB, MtrC, MtrD, MtrE, MtrF, MtrG and MtrH.

The protein resides in the cell membrane. It carries out the reaction 5-methyl-5,6,7,8-tetrahydromethanopterin + coenzyme M + 2 Na(+)(in) = 5,6,7,8-tetrahydromethanopterin + methyl-coenzyme M + 2 Na(+)(out). It functions in the pathway one-carbon metabolism; methanogenesis from CO(2); methyl-coenzyme M from 5,10-methylene-5,6,7,8-tetrahydromethanopterin: step 2/2. Functionally, part of a complex that catalyzes the formation of methyl-coenzyme M and tetrahydromethanopterin from coenzyme M and methyl-tetrahydromethanopterin. This is an energy-conserving, sodium-ion translocating step. In Methanococcus maripaludis (strain DSM 14266 / JCM 13030 / NBRC 101832 / S2 / LL), this protein is Tetrahydromethanopterin S-methyltransferase subunit C.